Reading from the N-terminus, the 6298-residue chain is Adhesion G-protein coupled receptor V1 (6298 aa).

A signal peptide spans 1 to 28 (MSVTSEPGMISSFLLVYLSTLFISFVFG). Calx-beta domains follow at residues 29 to 116 (EAEI…FHLT), 132 to 236 (ASVT…IQLR), 251 to 362 (VEII…IMLL), 389 to 489 (YGVL…LTIL), 646 to 746 (PAIA…TLSL), 764 to 862 (DLII…VILS), 877 to 980 (VNIT…IILL), 994 to 1094 (ASLR…IVLF), 1108 to 1208 (ATVI…LRLV), 1440 to 1540 (AMPR…FLLK), 1562 to 1662 (QKSD…VTLV), 1706 to 1805 (TGLP…VELL), 1846 to 1948 (ILVT…VSIL), 1962 to 2075 (TLTI…IELF), 2103 to 2202 (HLVI…VQLL), 2218 to 2320 (VITI…VQLA), 2437 to 2537 (TLCL…FLIS), 2576 to 2672 (FIIY…VRLG), 2687 to 2786 (VTVN…VVLY), 2810 to 2921 (LTVE…VNLT), 2945 to 3044 (QIVI…LLLT), and 3067 to 3167 (DGPG…VCTL). Topologically, residues 29–5901 (EAEIRFTGQT…TDNSSSYNEA (5873 aa)) are extracellular. EAR repeat units lie at residues 3251–3292 (VFSI…RWQG), 3293–3341 (TFVP…MLTA), 3344–3389 (RLVL…RWNG), 3391–3435 (NFAW…TWSG), 3437–3484 (QFIN…VWEM), and 3488–3530 (SLRY…CWNS). Calx-beta domains lie at 3581–3622 (QSDF…RVQL), 3636–3736 (SVRV…VVTL), 3772–3872 (GAVR…VTIA), 3919–4003 (GGVI…ISLV), 4017–4120 (VNVV…IELT), 4135–4235 (SVII…EFQL), 4251–4351 (ARIT…LAIT), 4384–4484 (RIII…ILLI), 4507–4607 (SPFG…IVQL), 4628–4728 (KFGD…AVQL), 4989–5089 (TTAE…INLT), 5281–5325 (AVEE…YVFL), and 5361–5461 (IGFS…FVEL). A GAIN-B domain is found at 5740–5896 (SILALHWNPQ…AVYAQTDNSS (157 aa)). Cystine bridges form between Cys5849/Cys5878 and Cys5866/Cys5880. The tract at residues 5849-5896 (CLLWNQAAASWLSDSQFCKVVEDASDYVECACSHMSVYAVYAQTDNSS) is GPS. Residues 5902-5922 (FFSAGLICISGLCLAVVSHMF) form a helical membrane-spanning segment. Residues 5923–5932 (CARHSMFAAK) are Cytoplasmic-facing. A helical membrane pass occupies residues 5933-5953 (LLTHMMVASLGTQILFLASAY). Topologically, residues 5954–5973 (ASPHLSEESCSAVAAVAHYL) are extracellular. A helical transmembrane segment spans residues 5974–5994 (YLCQFSWMLIQSVNFWYVLVV). The Cytoplasmic portion of the chain corresponds to 5995-6003 (SDEHTERRC). The helical transmembrane segment at 6004-6024 (LLFCLLSWGLPSFVVILLILI) threads the bilayer. Over 6025–6052 (LRGIYHRSMPQIYGLIHGDLCFIPNIYA) the chain is Extracellular. The helical transmembrane segment at 6053–6073 (ALFTAALVPLMCLVVVFVVFI) threads the bilayer. Residues 6074–6097 (HAYQLKPQWKGYDDVFRGRTNAAE) are Cytoplasmic-facing. The chain crosses the membrane as a helical span at residues 6098 to 6118 (IPLILYLFALISMTWLWGGLH). Residues 6119 to 6126 (MAYGHFWM) are Extracellular-facing. The chain crosses the membrane as a helical span at residues 6127–6147 (LVLFVIFNSLQGLYVFVVYFI). Topologically, residues 6148 to 6298 (LHNQTCCPMK…RRIPIADTHL (151 aa)) are cytoplasmic. Disordered stretches follow at residues 6206–6242 (ERSSFQQTSQASPDLKTSPQNGASFPSSGGYGPGSLI) and 6264–6283 (SVSDNESGQGSQEGGTLTDS). 2 stretches are compositionally biased toward polar residues: residues 6208 to 6226 (SSFQQTSQASPDLKTSPQN) and 6265 to 6283 (VSDNESGQGSQEGGTLTDS).

It belongs to the G-protein coupled receptor 2 family. Adhesion G-protein coupled receptor (ADGR) subfamily. Forms a heterodimer, consisting of a large extracellular region (alpha subunit) non-covalently linked to a seven-transmembrane moiety (beta subunit). Interacts (via the cytoplasmic region) with PDZD7. Component of USH2 complex, composed of ADGRV1, PDZD7, USH2A and WHRN. Interacts with USH2A and WHRN. Interacts (via the cytoplasmic region) with MYO7A (via MyTH4-FERM domains). In terms of processing, autoproteolytically cleaved into 2 subunits, an extracellular alpha subunit and a seven-transmembrane subunit. Expressed by oligodendrocytes. In midbrain, enriched in the myelinated regions of the superior and inferior colliculi. In the cochlea, expressed in developing hair cells. Expressed by photoreceptors in the retina.

It is found in the cell membrane. The protein resides in the cell projection. It localises to the stereocilium membrane. The protein localises to the photoreceptor inner segment. Its subcellular location is the secreted. Its function is as follows. G-protein coupled receptor which has an essential role in the development of hearing and vision. Couples to G-alpha(i)-proteins, GNAI1/2/3, G-alpha(q)-proteins, GNAQ, as well as G-alpha(s)-proteins, GNAS, inhibiting adenylate cyclase (AC) activity and cAMP production. Required for the hair bundle ankle formation, which connects growing stereocilia in developing cochlear hair cells of the inner ear. In response to extracellular calcium, activates kinases PKA and PKC to regulate myelination by inhibiting the ubiquitination of MAG, thus enhancing the stability of this protein in myelin-forming cells of the auditory pathway. In retina photoreceptors, the USH2 complex is required for the maintenance of periciliary membrane complex that seems to play a role in regulating intracellular protein transport. Involved in the regulation of bone metabolism. In terms of biological role, cleaved ADGRV1 beta-subunit couples with G-alpha(i)-proteins, GNAI1/2/3, and constitutively inhibits adenylate cyclase (AC) activity with a stronger effect than full ADGRV1. This chain is Adhesion G-protein coupled receptor V1, found in Mus musculus (Mouse).